We begin with the raw amino-acid sequence, 37 residues long: Hemocyanin subunit B (37 aa).

The protein belongs to the tyrosinase family. Hemocyanin subfamily. In terms of tissue distribution, hemolymph.

The protein resides in the secreted. The protein localises to the extracellular space. Its function is as follows. Hemocyanins are copper-containing oxygen carriers occurring freely dissolved in the hemolymph of many mollusks and arthropods. The chain is Hemocyanin subunit B from Cancer pagurus (Rock crab).